We begin with the raw amino-acid sequence, 205 residues long: uncharacterized protein (205 aa).

Positions 10–75 form a coiled coil; sequence QDLLSAVDQQ…AANLMTVMTD (66 aa). Positions 108–141 are disordered; sequence MPLPSSNTNNDQTSPPASGKTSETPKKNPTNAMF. A compositionally biased stretch (polar residues) spans 111–141; sequence PSSNTNNDQTSPPASGKTSETPKKNPTNAMF.

Belongs to the asfivirus K205R family.

It is found in the host cytoplasm. In terms of biological role, induces host endoplasmic reticulum stress and consequently activates autophagy and NF-kappa-B signaling pathway. In turn, may induce autophagy-mediated STING1 degradation and innate immune evasion. This is an uncharacterized protein from Ornithodoros (relapsing fever ticks).